The primary structure comprises 121 residues: Small ribosomal subunit protein bS6 (121 aa).

The segment at 99-121 (PSLMMRNVEREEARKTQQQEFAA) is disordered. Residues 105–115 (NVEREEARKTQ) show a composition bias toward basic and acidic residues.

It belongs to the bacterial ribosomal protein bS6 family.

Binds together with bS18 to 16S ribosomal RNA. The sequence is that of Small ribosomal subunit protein bS6 from Polaromonas naphthalenivorans (strain CJ2).